The following is a 1429-amino-acid chain: Nitric oxide synthase 1 (1429 aa).

The tract at residues 1 to 200 (MEEHTFGVQQ…LQDSGEQDEL (200 aa)) is interaction with NOSIP. A PDZ domain is found at 17–99 (SVRLFKRKVG…ETHVVLILRG (83 aa)). Disordered regions lie at residues 114 to 174 (DGTP…SVSQ) and 271 to 298 (NNPY…SRCP). The interval 163–240 (QGRGQGAGSV…TGIQVDRDLD (78 aa)) is interaction with DYNLL1/PIN. Positions 272-294 (NPYSENEQSPASGKQSPTKNGSP) are enriched in polar residues. At serine 280 the chain carries Phosphoserine. Position 334 (serine 334) interacts with (6R)-L-erythro-5,6,7,8-tetrahydrobiopterin. Cysteine 415 serves as a coordination point for heme b. Positions 478, 587, 588, and 592 each coordinate L-arginine. (6R)-L-erythro-5,6,7,8-tetrahydrobiopterin contacts are provided by valine 677, tryptophan 678, and phenylalanine 691. A heme b-binding site is contributed by tyrosine 706. The segment at 725-745 (KRRAIGFKKLAEAVKFSAKLM) is calmodulin-binding. The Flavodoxin-like domain occupies 755–935 (ATILYATETG…AFRTWAKKVF (181 aa)). 8 residues coordinate FMN: threonine 761, glutamate 762, threonine 763, lysine 765, serine 766, serine 807, threonine 808, and glycine 812. A phosphoserine mark is found at serine 847, serine 857, and serine 858. 5 residues coordinate FMN: serine 886, histidine 891, cysteine 893, glutamate 919, and glutamine 923. The 248-residue stretch at 990–1237 (KRVSAARLLS…VRGAPSFHLP (248 aa)) folds into the FAD-binding FR-type domain. An NADP(+)-binding site is contributed by arginine 1010. Residues histidine 1032, arginine 1173, tyrosine 1174, tyrosine 1175, serine 1176, threonine 1191, and alanine 1193 each coordinate FAD. Serine 1196 is a binding site for NADP(+). FAD is bound by residues tyrosine 1197, valine 1210, cysteine 1211, and serine 1212. Residues threonine 1251, arginine 1284, serine 1313, arginine 1314, lysine 1320, tyrosine 1322, glutamine 1324, aspartate 1357, threonine 1398, and arginine 1400 each coordinate NADP(+).

This sequence belongs to the NOS family. As to quaternary structure, homodimer. Interacts with DLG4; the interaction possibly being prevented by the association between NOS1 and CAPON. Forms a ternary complex with CAPON and RASD1. Forms a ternary complex with CAPON and SYN1. Interacts with ZDHHC23. Interacts with NOSIP; which may impair its synaptic location. Interacts with HTR4. Interacts with VAC14. Interacts (via N-terminal domain) with DLG4 (via N-terminal tandem pair of PDZ domains). Interacts with SLC6A4. Forms a complex with ASL, ASS1 and SLC7A1; the complex regulates cell-autonomous L-arginine synthesis and citrulline recycling while channeling extracellular L-arginine to nitric oxide synthesis pathway. Interacts with DMD; localizes NOS1 to sarcolemma in muscle cells. Interacts with DYNLL1; inhibits the nitric oxide synthase activity. Heme b serves as cofactor. The cofactor is FAD. Requires FMN as cofactor. It depends on (6R)-L-erythro-5,6,7,8-tetrahydrobiopterin as a cofactor. Post-translationally, ubiquitinated; mediated by STUB1/CHIP in the presence of Hsp70 and Hsp40 (in vitro). As to expression, widely expressed in the nervous system: expressed in cerebrum, olfactory bulb, hippocampus, midbrain, cerebellum, pons, medulla oblongata, and spinal cord. Also found in skeletal muscle, where it is localized beneath the sarcolemma of fast twitch muscle fibers, and in spleen, heart, kidney, and liver. N-NOS-1 and N-NOS-2 are found in all parts of the nervous system. NNOS beta and gamma occur in a region-specific manner in the brain and NNOS beta expression is developmentally regulated. NNOS Mu is only found in mature skeletal and cardiac muscles.

The protein resides in the cell membrane. It is found in the sarcolemma. Its subcellular location is the cell projection. It localises to the dendritic spine. The enzyme catalyses 2 L-arginine + 3 NADPH + 4 O2 + H(+) = 2 L-citrulline + 2 nitric oxide + 3 NADP(+) + 4 H2O. With respect to regulation, stimulated by calcium/calmodulin. Inhibited by DYNLL1 that prevents the dimerization of the protein. Inhibited by NOSIP. Functionally, produces nitric oxide (NO) which is a messenger molecule with diverse functions throughout the body. In the brain and peripheral nervous system, NO displays many properties of a neurotransmitter. Probably has nitrosylase activity and mediates cysteine S-nitrosylation of cytoplasmic target proteins such SRR. Isoform NNOS Mu may be an effector enzyme for the dystrophin complex. This chain is Nitric oxide synthase 1, found in Mus musculus (Mouse).